The sequence spans 552 residues: Pyrophosphate--fructose 6-phosphate 1-phosphotransferase subunit beta (552 aa).

Gly-90 serves as a coordination point for diphosphate. Asp-184 provides a ligand contact to Mg(2+). Residues 212–214 (TID), 251–252 (KY), 259–261 (MGR), Glu-320, and 425–428 (YEGR) contribute to the substrate site. Asp-214 (proton acceptor) is an active-site residue.

Belongs to the phosphofructokinase type A (PFKA) family. PPi-dependent PFK group II subfamily. Clade 'Long' sub-subfamily. As to quaternary structure, tetramer of two alpha (regulatory) and two beta (catalytic) chains. It depends on Mg(2+) as a cofactor.

The protein resides in the cytoplasm. It catalyses the reaction beta-D-fructose 6-phosphate + diphosphate = beta-D-fructose 1,6-bisphosphate + phosphate + H(+). The protein operates within carbohydrate degradation; glycolysis; D-glyceraldehyde 3-phosphate and glycerone phosphate from D-glucose: step 3/4. With respect to regulation, allosterically activated by fructose 2,6-bisphosphate. Its function is as follows. Catalytic subunit of pyrophosphate--fructose 6-phosphate 1-phosphotransferase. Catalyzes the phosphorylation of D-fructose 6-phosphate, the first committing step of glycolysis. Uses inorganic phosphate (PPi) as phosphoryl donor instead of ATP like common ATP-dependent phosphofructokinases (ATP-PFKs), which renders the reaction reversible, and can thus function both in glycolysis and gluconeogenesis. In Ricinus communis (Castor bean), this protein is Pyrophosphate--fructose 6-phosphate 1-phosphotransferase subunit beta.